Consider the following 209-residue polypeptide: Probable septum site-determining protein MinC (209 aa).

This sequence belongs to the MinC family. Interacts with MinD and FtsZ.

Cell division inhibitor that blocks the formation of polar Z ring septums. Rapidly oscillates between the poles of the cell to destabilize FtsZ filaments that have formed before they mature into polar Z rings. Prevents FtsZ polymerization. The sequence is that of Probable septum site-determining protein MinC from Clostridium kluyveri (strain NBRC 12016).